The chain runs to 159 residues: uncharacterized protein (159 aa).

It belongs to the IIV-6 136R family.

This is an uncharacterized protein from Invertebrate iridescent virus 3 (IIV-3).